The primary structure comprises 126 residues: Small ribosomal subunit protein uS13 (126 aa).

Residues 92 to 126 (HRMGLPVRGQRTRTNARTRRGRRQTVAGKKKAPGK) are disordered. The span at 101–126 (QRTRTNARTRRGRRQTVAGKKKAPGK) shows a compositional bias: basic residues.

Belongs to the universal ribosomal protein uS13 family. In terms of assembly, part of the 30S ribosomal subunit. Forms a loose heterodimer with protein S19. Forms two bridges to the 50S subunit in the 70S ribosome.

In terms of biological role, located at the top of the head of the 30S subunit, it contacts several helices of the 16S rRNA. In the 70S ribosome it contacts the 23S rRNA (bridge B1a) and protein L5 of the 50S subunit (bridge B1b), connecting the 2 subunits; these bridges are implicated in subunit movement. Contacts the tRNAs in the A and P-sites. The polypeptide is Small ribosomal subunit protein uS13 (Nostoc punctiforme (strain ATCC 29133 / PCC 73102)).